A 157-amino-acid polypeptide reads, in one-letter code: S-ribosylhomocysteine lyase (157 aa).

Positions 54, 58, and 126 each coordinate Fe cation.

It belongs to the LuxS family. In terms of assembly, homodimer. Fe cation is required as a cofactor.

It catalyses the reaction S-(5-deoxy-D-ribos-5-yl)-L-homocysteine = (S)-4,5-dihydroxypentane-2,3-dione + L-homocysteine. Functionally, involved in the synthesis of autoinducer 2 (AI-2) which is secreted by bacteria and is used to communicate both the cell density and the metabolic potential of the environment. The regulation of gene expression in response to changes in cell density is called quorum sensing. Catalyzes the transformation of S-ribosylhomocysteine (RHC) to homocysteine (HC) and 4,5-dihydroxy-2,3-pentadione (DPD). This is S-ribosylhomocysteine lyase from Bacillus cereus (strain G9842).